The primary structure comprises 195 residues: Nucleoside triphosphate pyrophosphatase (195 aa).

Aspartate 70 functions as the Proton acceptor in the catalytic mechanism.

It belongs to the Maf family. A divalent metal cation is required as a cofactor.

It localises to the cytoplasm. It carries out the reaction a ribonucleoside 5'-triphosphate + H2O = a ribonucleoside 5'-phosphate + diphosphate + H(+). The enzyme catalyses a 2'-deoxyribonucleoside 5'-triphosphate + H2O = a 2'-deoxyribonucleoside 5'-phosphate + diphosphate + H(+). Functionally, nucleoside triphosphate pyrophosphatase. May have a dual role in cell division arrest and in preventing the incorporation of modified nucleotides into cellular nucleic acids. This Cyanothece sp. (strain PCC 7425 / ATCC 29141) protein is Nucleoside triphosphate pyrophosphatase.